The following is a 441-amino-acid chain: Arginine biosynthesis bifunctional protein ArgJ, mitochondrial (441 aa).

Threonine 177, lysine 203, threonine 214, glutamate 303, asparagine 436, and serine 441 together coordinate substrate. Threonine 214 (nucleophile) is an active-site residue.

This sequence belongs to the ArgJ family. Heterodimer of an alpha and a beta chain. The alpha and beta chains are autoproteolytically processed from a single precursor protein within the mitochondrion.

It localises to the mitochondrion matrix. The enzyme catalyses N(2)-acetyl-L-ornithine + L-glutamate = N-acetyl-L-glutamate + L-ornithine. It catalyses the reaction L-glutamate + acetyl-CoA = N-acetyl-L-glutamate + CoA + H(+). It participates in amino-acid biosynthesis; L-arginine biosynthesis; L-ornithine and N-acetyl-L-glutamate from L-glutamate and N(2)-acetyl-L-ornithine (cyclic): step 1/1. Its pathway is amino-acid biosynthesis; L-arginine biosynthesis; N(2)-acetyl-L-ornithine from L-glutamate: step 1/4. Functionally, catalyzes two activities which are involved in the cyclic version of arginine biosynthesis: the synthesis of acetylglutamate from glutamate and acetyl-CoA, and of ornithine by transacetylation between acetylornithine and glutamate. The protein is Arginine biosynthesis bifunctional protein ArgJ, mitochondrial of Debaryomyces hansenii (strain ATCC 36239 / CBS 767 / BCRC 21394 / JCM 1990 / NBRC 0083 / IGC 2968) (Yeast).